We begin with the raw amino-acid sequence, 172 residues long: Antibacterial protein PR-39 (172 aa).

Residues 1–29 form the signal peptide; sequence METQRASLCLGRWSLWLLLLGLVVPSASA. Position 30 is a pyrrolidone carboxylic acid (Q30). A propeptide spanning residues 30 to 130 is cleaved from the precursor; sequence QALSYREAVL…DISCNEIQSV (101 aa). The disordered stretch occupies residues 61-80; the sequence is DQPPKADEDPGTPKPVSFTV. Disulfide bonds link C85–C96 and C107–C124. The disordered stretch occupies residues 130–172; the sequence is VRRRPRPPYLPRPRPPPFFPPRLPPRIPPGFPPRFPPRFPGKR. The span at 136-172 shows a compositional bias: pro residues; sequence PPYLPRPRPPPFFPPRLPPRIPPGFPPRFPPRFPGKR. Residue P169 is modified to Proline amide.

This sequence belongs to the cathelicidin family. Small intestine and bone marrow.

The protein localises to the secreted. Its function is as follows. Exerts a potent antimicrobial activity against both E.coli and B.megaterium. The protein is Antibacterial protein PR-39 (PR39) of Sus scrofa (Pig).